Here is a 47-residue protein sequence, read N- to C-terminus: Diuretic hormone 2 (47 aa).

Belongs to the sauvagine/corticotropin-releasing factor/urotensin I family.

Its subcellular location is the secreted. Its function is as follows. Stimulates fluid secretion by the Malpighian tubules. Increases cyclic AMP production in Malpighian tubules. This is Diuretic hormone 2 from Tenebrio molitor (Yellow mealworm beetle).